A 287-amino-acid chain; its full sequence is Pantothenate synthetase (287 aa).

An ATP-binding site is contributed by methionine 30–histidine 37. Histidine 37 acts as the Proton donor in catalysis. Glutamine 61 is a (R)-pantoate binding site. Residue glutamine 61 participates in beta-alanine binding. Position 147–150 (glycine 147–aspartate 150) interacts with ATP. Residue glutamine 153 participates in (R)-pantoate binding. Methionine 184–arginine 187 lines the ATP pocket.

It belongs to the pantothenate synthetase family. As to quaternary structure, homodimer.

The protein resides in the cytoplasm. It carries out the reaction (R)-pantoate + beta-alanine + ATP = (R)-pantothenate + AMP + diphosphate + H(+). Its pathway is cofactor biosynthesis; (R)-pantothenate biosynthesis; (R)-pantothenate from (R)-pantoate and beta-alanine: step 1/1. Functionally, catalyzes the condensation of pantoate with beta-alanine in an ATP-dependent reaction via a pantoyl-adenylate intermediate. The chain is Pantothenate synthetase from Granulibacter bethesdensis (strain ATCC BAA-1260 / CGDNIH1).